The following is a 766-amino-acid chain: EMILIN-3 (766 aa).

A signal peptide spans 1 to 22 (MGRRRLLVWLCAVAALLSGAQA). An EMI domain is found at 55–131 (HKALCAYVVH…PGFTGKRCPE (77 aa)). 3 disulfides stabilise this stretch: cysteine 59/cysteine 121, cysteine 86/cysteine 92, and cysteine 120/cysteine 129. An N-linked (GlcNAc...) asparagine glycan is attached at asparagine 66. The tract at residues 132–179 (HLTDHGAASPQLEPEPQIPSGQLDPGPRPPSYSRAAPSPHGRKGPGLF) is disordered. An N-linked (GlcNAc...) asparagine glycan is attached at asparagine 443. A coiled-coil region spans residues 467–491 (GTMLEERVQSLEERLATLAGELSHD). Asparagine 562, asparagine 616, and asparagine 732 each carry an N-linked (GlcNAc...) asparagine glycan. Coiled coils occupy residues 615–663 (ANTS…QLKA) and 726–761 (SHVD…EQVR).

The protein localises to the secreted. It is found in the extracellular space. The protein resides in the extracellular matrix. In Homo sapiens (Human), this protein is EMILIN-3 (EMILIN3).